A 103-amino-acid chain; its full sequence is Ghrelin (103 aa).

Positions 1-26 (MPLRRRASHMFVLLCALSLCVESVKG) are cleaved as a signal peptide. The segment at 27–51 (GTSFLSPAQKPQGRRPPRMGRRDVA) is disordered. A lipid anchor (O-decanoyl serine; alternate) is attached at serine 29. Residue serine 29 is the site of O-hexanoyl serine; alternate attachment. Residue serine 29 is the site of O-octanoyl serine; alternate attachment. A Glutamine amide modification is found at glutamine 38. At methionine 45 the chain carries Methionine amide. Residues 49 to 103 (DVAEPEIPVIKEDDQFMMSAPFELSVSLSEAEYEKYGPVLQKVLVNLLGDSPLEF) constitute a propeptide, removed in mature form.

Belongs to the motilin family. In terms of processing, O-octanoylated by GOAT/MBOAT4. O-octanoylation or O-decanoylation is essential for activity. The O-decanoylated form differs in the length of the carbon backbone of the carboxylic acid forming an ester bond with Ser-29. In terms of tissue distribution, expressed in the telencephalon, hypothalamus, pituitary, intestine, liver, spleen and gill, with expression strongest in the intestine.

The protein localises to the secreted. Ligand for growth hormone secretagogue receptor type 1 (GHSR). Induces the release of growth hormone from the pituitary. Induces adiposity and stimulates gastric acid secretion. Involved in growth regulation. Has an appetite-stimulating effect. The chain is Ghrelin (ghrl) from Carassius auratus (Goldfish).